Here is a 457-residue protein sequence, read N- to C-terminus: Cysteine--tRNA ligase (457 aa).

Cysteine 28 lines the Zn(2+) pocket. Residues 30 to 40 carry the 'HIGH' region motif; sequence MTVYDLCHIGH. The Zn(2+) site is built by cysteine 209, histidine 234, and glutamate 238. The 'KMSKS' region signature appears at 266 to 270; the sequence is KMSKS. Residue lysine 269 coordinates ATP.

The protein belongs to the class-I aminoacyl-tRNA synthetase family. Monomer. Requires Zn(2+) as cofactor.

The protein localises to the cytoplasm. The catalysed reaction is tRNA(Cys) + L-cysteine + ATP = L-cysteinyl-tRNA(Cys) + AMP + diphosphate. This is Cysteine--tRNA ligase from Chromobacterium violaceum (strain ATCC 12472 / DSM 30191 / JCM 1249 / CCUG 213 / NBRC 12614 / NCIMB 9131 / NCTC 9757 / MK).